Here is a 161-residue protein sequence, read N- to C-terminus: Type-1 angiotensin II receptor-associated protein (161 aa).

Over 1 to 26 (MELPAVNLKVILLVHWLLTTWGCLVF) the chain is Extracellular. The helical transmembrane segment at 27 to 47 (SSSYAWGNFTILALGVWAVAQ) threads the bilayer. Residues 48–53 (RDSIDA) lie on the Cytoplasmic side of the membrane. The helical transmembrane segment at 54–74 (IGMFLGGLVATIFLDIIYISI) threads the bilayer. Topologically, residues 75–86 (FYSSVATGDTGR) are extracellular. Residues 87–107 (FGAGMAILSLLLKPFSCCLVY) form a helical membrane-spanning segment. Residues 108–161 (HMHRERGGELPLRPDFFGPSQEHSAYQTIDSSSDAAADPFASLENKGQAVPRGY) are Cytoplasmic-facing. Residues 110 to 122 (HRERGGELPLRPD) form an interaction with AGTR1 region. At serine 127 the chain carries Phosphoserine. Threonine 135 carries the post-translational modification Phosphothreonine. Residue serine 138 is modified to Phosphoserine.

In terms of assembly, interacts with RACK1, and with the C-terminal region of AGTR1. Ubiquitous but more abundant in kidney, testis and heart.

It is found in the endoplasmic reticulum membrane. Its subcellular location is the golgi apparatus membrane. The protein localises to the cytoplasmic vesicle membrane. In terms of biological role, appears to be a negative regulator of type-1 angiotensin II receptor-mediated signaling by regulating receptor internalization as well as mechanism of receptor desensitization such as phosphorylation. Also induces a decrease in angiotensin II-stimulated transcriptional activity. May play a role of negative regulator in cardiomyocyte hypertrophy induced by angiotensin II through an inhibition of p38 mitogen-activated protein kinase pathway. The polypeptide is Type-1 angiotensin II receptor-associated protein (Agtrap) (Mus musculus (Mouse)).